The sequence spans 606 residues: Elongation factor 4 (606 aa).

The tr-type G domain maps to 11–193; that stretch reads DKIRNFSIVA…AIVTRLPPPK (183 aa). Residues 23–28 and 140–143 each bind GTP; these read DHGKST and NKVD.

This sequence belongs to the TRAFAC class translation factor GTPase superfamily. Classic translation factor GTPase family. LepA subfamily.

The protein localises to the cell inner membrane. The catalysed reaction is GTP + H2O = GDP + phosphate + H(+). Functionally, required for accurate and efficient protein synthesis under certain stress conditions. May act as a fidelity factor of the translation reaction, by catalyzing a one-codon backward translocation of tRNAs on improperly translocated ribosomes. Back-translocation proceeds from a post-translocation (POST) complex to a pre-translocation (PRE) complex, thus giving elongation factor G a second chance to translocate the tRNAs correctly. Binds to ribosomes in a GTP-dependent manner. The chain is Elongation factor 4 from Caulobacter vibrioides (strain ATCC 19089 / CIP 103742 / CB 15) (Caulobacter crescentus).